The following is a 557-amino-acid chain: Dihydroxy-acid dehydratase (557 aa).

Cys-50 serves as a coordination point for [2Fe-2S] cluster. Asp-82 is a Mg(2+) binding site. Position 123 (Cys-123) interacts with [2Fe-2S] cluster. Mg(2+) contacts are provided by Asp-124 and Lys-125. Lys-125 is subject to N6-carboxylysine. Cys-195 lines the [2Fe-2S] cluster pocket. Glu-447 lines the Mg(2+) pocket. Ser-473 acts as the Proton acceptor in catalysis.

The protein belongs to the IlvD/Edd family. As to quaternary structure, homodimer. It depends on [2Fe-2S] cluster as a cofactor. Mg(2+) serves as cofactor.

It carries out the reaction (2R)-2,3-dihydroxy-3-methylbutanoate = 3-methyl-2-oxobutanoate + H2O. The catalysed reaction is (2R,3R)-2,3-dihydroxy-3-methylpentanoate = (S)-3-methyl-2-oxopentanoate + H2O. Its pathway is amino-acid biosynthesis; L-isoleucine biosynthesis; L-isoleucine from 2-oxobutanoate: step 3/4. It functions in the pathway amino-acid biosynthesis; L-valine biosynthesis; L-valine from pyruvate: step 3/4. Its function is as follows. Functions in the biosynthesis of branched-chain amino acids. Catalyzes the dehydration of (2R,3R)-2,3-dihydroxy-3-methylpentanoate (2,3-dihydroxy-3-methylvalerate) into 2-oxo-3-methylpentanoate (2-oxo-3-methylvalerate) and of (2R)-2,3-dihydroxy-3-methylbutanoate (2,3-dihydroxyisovalerate) into 2-oxo-3-methylbutanoate (2-oxoisovalerate), the penultimate precursor to L-isoleucine and L-valine, respectively. The sequence is that of Dihydroxy-acid dehydratase from Ralstonia nicotianae (strain ATCC BAA-1114 / GMI1000) (Ralstonia solanacearum).